The following is a 527-amino-acid chain: Peptidoglycan O-acetyltransferase (527 aa).

The next 11 membrane-spanning stretches (helical) occupy residues V11–L31, L55–F75, L96–F116, L131–M151, H187–V207, N228–D248, L280–I300, L352–W372, M397–F417, I463–L483, and L505–F525. The active site involves H363.

The protein belongs to the membrane-bound acyltransferase family.

The protein localises to the cell membrane. Catalyzes the O-acetylation of peptidoglycan (PG), an important mechanism that appears to confer lysozyme resistance and contributes to pathogen persistence in the host. The chain is Peptidoglycan O-acetyltransferase (patA) from Helicobacter pylori (strain ATCC 700392 / 26695) (Campylobacter pylori).